A 498-amino-acid chain; its full sequence is tRNA-guanine(15) transglycosylase (498 aa).

Residue Asp85 is the Nucleophile of the active site. Substrate is bound at residue Asp120. Zn(2+)-binding residues include Cys275, Cys277, and Cys280.

Belongs to the archaeosine tRNA-ribosyltransferase family. Zn(2+) serves as cofactor.

The enzyme catalyses guanosine(15) in tRNA + 7-cyano-7-deazaguanine = 7-cyano-7-carbaguanosine(15) in tRNA + guanine. It functions in the pathway tRNA modification; archaeosine-tRNA biosynthesis. Exchanges the guanine residue with 7-cyano-7-deazaguanine (preQ0) at position 15 in the dihydrouridine loop (D-loop) of archaeal tRNAs. The sequence is that of tRNA-guanine(15) transglycosylase from Sulfolobus acidocaldarius (strain ATCC 33909 / DSM 639 / JCM 8929 / NBRC 15157 / NCIMB 11770).